The following is a 208-amino-acid chain: Outer-membrane lipoprotein carrier protein (208 aa).

Positions Met1–Ala25 are cleaved as a signal peptide.

This sequence belongs to the LolA family. Monomer.

The protein resides in the periplasm. Participates in the translocation of lipoproteins from the inner membrane to the outer membrane. Only forms a complex with a lipoprotein if the residue after the N-terminal Cys is not an aspartate (The Asp acts as a targeting signal to indicate that the lipoprotein should stay in the inner membrane). The chain is Outer-membrane lipoprotein carrier protein from Vibrio campbellii (strain ATCC BAA-1116).